We begin with the raw amino-acid sequence, 470 residues long: Cysteine--tRNA ligase (470 aa).

Cys29 is a Zn(2+) binding site. The 'HIGH' region motif lies at 31-41; it reads PTVYNYAHIGN. Residues Cys211, His236, and Glu240 each coordinate Zn(2+). Residues 273–277 carry the 'KMSKS' region motif; sequence KMSKS. Position 276 (Lys276) interacts with ATP.

This sequence belongs to the class-I aminoacyl-tRNA synthetase family. As to quaternary structure, monomer. Zn(2+) serves as cofactor.

It is found in the cytoplasm. The catalysed reaction is tRNA(Cys) + L-cysteine + ATP = L-cysteinyl-tRNA(Cys) + AMP + diphosphate. In Phenylobacterium zucineum (strain HLK1), this protein is Cysteine--tRNA ligase.